The following is a 139-amino-acid chain: Small ribosomal subunit protein uS12 (139 aa).

Residue Asp-102 is modified to 3-methylthioaspartic acid.

The protein belongs to the universal ribosomal protein uS12 family. In terms of assembly, part of the 30S ribosomal subunit. Contacts proteins S8 and S17. May interact with IF1 in the 30S initiation complex.

In terms of biological role, with S4 and S5 plays an important role in translational accuracy. Its function is as follows. Interacts with and stabilizes bases of the 16S rRNA that are involved in tRNA selection in the A site and with the mRNA backbone. Located at the interface of the 30S and 50S subunits, it traverses the body of the 30S subunit contacting proteins on the other side and probably holding the rRNA structure together. The combined cluster of proteins S8, S12 and S17 appears to hold together the shoulder and platform of the 30S subunit. This chain is Small ribosomal subunit protein uS12, found in Mycoplasma capricolum subsp. capricolum (strain California kid / ATCC 27343 / NCTC 10154).